The primary structure comprises 87 residues: uncharacterized protein (87 aa).

This is an uncharacterized protein from Saccharomyces cerevisiae (strain ATCC 204508 / S288c) (Baker's yeast).